The sequence spans 471 residues: ATP synthase subunit beta (471 aa).

156–163 is an ATP binding site; it reads GGAGVGKT.

This sequence belongs to the ATPase alpha/beta chains family. As to quaternary structure, F-type ATPases have 2 components, CF(1) - the catalytic core - and CF(0) - the membrane proton channel. CF(1) has five subunits: alpha(3), beta(3), gamma(1), delta(1), epsilon(1). CF(0) has three main subunits: a(1), b(2) and c(9-12). The alpha and beta chains form an alternating ring which encloses part of the gamma chain. CF(1) is attached to CF(0) by a central stalk formed by the gamma and epsilon chains, while a peripheral stalk is formed by the delta and b chains.

The protein resides in the cell membrane. The catalysed reaction is ATP + H2O + 4 H(+)(in) = ADP + phosphate + 5 H(+)(out). Its function is as follows. Produces ATP from ADP in the presence of a proton gradient across the membrane. The catalytic sites are hosted primarily by the beta subunits. In Macrococcus caseolyticus (strain JCSC5402) (Macrococcoides caseolyticum), this protein is ATP synthase subunit beta.